A 309-amino-acid chain; its full sequence is tRNA uridine(34) hydroxylase (309 aa).

Residues 137–232 (RGDEVVFFDG…YGEKYGDKGL (96 aa)) enclose the Rhodanese domain. The active-site Cysteine persulfide intermediate is the C192.

The protein belongs to the TrhO family.

The catalysed reaction is uridine(34) in tRNA + AH2 + O2 = 5-hydroxyuridine(34) in tRNA + A + H2O. Its function is as follows. Catalyzes oxygen-dependent 5-hydroxyuridine (ho5U) modification at position 34 in tRNAs. The sequence is that of tRNA uridine(34) hydroxylase from Corynebacterium jeikeium (strain K411).